The primary structure comprises 108 residues: MLKTTLLFFATALCEIIGCYLPWLWLKRGATPLLLIPTGLALALFVWLLTLHPAASGRVYAAYGGVYVCTALLWLRVVDGVKLSHYDWAGAIIALCGMLIIVAGWGRA.

The next 4 helical transmembrane spans lie at 6–26 (LLFF…WLWL), 29–49 (GATP…VWLL), 61–81 (AAYG…VDGV), and 86–106 (YDWA…AGWG).

Belongs to the UPF0060 family.

Its subcellular location is the cell inner membrane. The polypeptide is UPF0060 membrane protein KPK_2870 (Klebsiella pneumoniae (strain 342)).